We begin with the raw amino-acid sequence, 690 residues long: Glycine--tRNA ligase beta subunit (690 aa).

The protein belongs to the class-II aminoacyl-tRNA synthetase family. As to quaternary structure, tetramer of two alpha and two beta subunits.

The protein resides in the cytoplasm. It catalyses the reaction tRNA(Gly) + glycine + ATP = glycyl-tRNA(Gly) + AMP + diphosphate. The polypeptide is Glycine--tRNA ligase beta subunit (Desulfatibacillum aliphaticivorans).